We begin with the raw amino-acid sequence, 231 residues long: Putative N-acetylmannosamine-6-phosphate 2-epimerase (231 aa).

Belongs to the NanE family.

The catalysed reaction is an N-acyl-D-glucosamine 6-phosphate = an N-acyl-D-mannosamine 6-phosphate. The protein operates within amino-sugar metabolism; N-acetylneuraminate degradation; D-fructose 6-phosphate from N-acetylneuraminate: step 3/5. Functionally, converts N-acetylmannosamine-6-phosphate (ManNAc-6-P) to N-acetylglucosamine-6-phosphate (GlcNAc-6-P). In Listeria monocytogenes serotype 4b (strain F2365), this protein is Putative N-acetylmannosamine-6-phosphate 2-epimerase.